We begin with the raw amino-acid sequence, 779 residues long: Endonuclease MutS2 (779 aa).

328 to 335 serves as a coordination point for ATP; it reads GPNTGGKT. The 76-residue stretch at 704-779 folds into the Smr domain; it reads LDLRGKRYEE…GSGATIVTLG (76 aa).

It belongs to the DNA mismatch repair MutS family. MutS2 subfamily. In terms of assembly, homodimer. Binds to stalled ribosomes, contacting rRNA.

Its function is as follows. Endonuclease that is involved in the suppression of homologous recombination and thus may have a key role in the control of bacterial genetic diversity. In terms of biological role, acts as a ribosome collision sensor, splitting the ribosome into its 2 subunits. Detects stalled/collided 70S ribosomes which it binds and splits by an ATP-hydrolysis driven conformational change. Acts upstream of the ribosome quality control system (RQC), a ribosome-associated complex that mediates the extraction of incompletely synthesized nascent chains from stalled ribosomes and their subsequent degradation. Probably generates substrates for RQC. In Streptococcus pyogenes serotype M18 (strain MGAS8232), this protein is Endonuclease MutS2.